A 64-amino-acid polypeptide reads, in one-letter code: Neurotoxin lambda-MeuTx (64 aa).

A signal peptide spans 1-18 (MSTFIVVFLLLTAILCHA). Residues 19-27 (EHAIDETAR) constitute a propeptide that is removed on maturation. 3 disulfide bridges follow: Cys-29-Cys-43, Cys-36-Cys-49, and Cys-42-Cys-58.

This sequence belongs to the scorpion calcin-like family. As to expression, expressed by the venom gland.

It is found in the secreted. In terms of biological role, voltage-gated potassium channel (Kv) inhibitor. In addition it may increase intracellular calcium release through the activation of nuclear inositol 1,4,5-trisphosphate receptors (ITPR) of cardiomyocytes, thereby causing an increase in the contraction frequency of these cells. This is Neurotoxin lambda-MeuTx from Mesobuthus eupeus (Lesser Asian scorpion).